The primary structure comprises 278 residues: Orotidine 5'-phosphate decarboxylase (278 aa).

Lys96 acts as the Proton donor in catalysis.

Belongs to the OMP decarboxylase family. Type 2 subfamily.

It catalyses the reaction orotidine 5'-phosphate + H(+) = UMP + CO2. It participates in pyrimidine metabolism; UMP biosynthesis via de novo pathway; UMP from orotate: step 2/2. This Salinispora tropica (strain ATCC BAA-916 / DSM 44818 / JCM 13857 / NBRC 105044 / CNB-440) protein is Orotidine 5'-phosphate decarboxylase.